Here is a 142-residue protein sequence, read N- to C-terminus: Large ribosomal subunit protein uL11 (142 aa).

This sequence belongs to the universal ribosomal protein uL11 family. In terms of assembly, part of the ribosomal stalk of the 50S ribosomal subunit. Interacts with L10 and the large rRNA to form the base of the stalk. L10 forms an elongated spine to which L12 dimers bind in a sequential fashion forming a multimeric L10(L12)X complex. One or more lysine residues are methylated.

In terms of biological role, forms part of the ribosomal stalk which helps the ribosome interact with GTP-bound translation factors. The protein is Large ribosomal subunit protein uL11 of Mycobacterium leprae (strain Br4923).